The primary structure comprises 633 residues: Probable methyltransferase PMT15 (633 aa).

At 1–24 (MGNYRWPSKLSKLSLRAKQTNLYR) the chain is on the cytoplasmic side. Residues 25–45 (VILIAILCVTFYFVGVWQHSG) traverse the membrane as a helical; Signal-anchor for type II membrane protein segment. Residues 46 to 633 (RGISRSSISN…APAPDQSSDP (588 aa)) are Lumenal-facing. Asparagine 113 and asparagine 298 each carry an N-linked (GlcNAc...) asparagine glycan.

Belongs to the methyltransferase superfamily.

The protein localises to the golgi apparatus membrane. This is Probable methyltransferase PMT15 from Arabidopsis thaliana (Mouse-ear cress).